Here is a 484-residue protein sequence, read N- to C-terminus: uncharacterized protein (484 aa).

The next 12 membrane-spanning stretches (helical) occupy residues 19-39 (LSFGVGITLWALIVFAYMIFV), 78-98 (VNWGITIGRGIGSVLVGWLIV), 111-131 (FFMLFGIIAPYSPTYAGFIIL), 134-154 (IFAIGGTMQIILIQPVVSNYL), 165-185 (FSPFFYPIGTIITLIPFAGII), 199-219 (IVFLVIGLLTLIPLIGYIILG), 249-269 (TWYWTILYGSWLVAVVFPFTF), 289-309 (ISVFLIFFLAGMFLGPFTIGL), 321-341 (ISTIITLGVFFYVLATVVFVL), 360-380 (LFLFLGLFMGICLWGIQGVML), 398-418 (FGLIWGLGYTAFTIATIITSL), and 440-460 (LGAYILIIIFSLVSSIGLALL).

The protein resides in the cell membrane. This is an uncharacterized protein from Mesomycoplasma hyopneumoniae (strain 232) (Mycoplasma hyopneumoniae).